We begin with the raw amino-acid sequence, 236 residues long: 2-C-methyl-D-erythritol 4-phosphate cytidylyltransferase (236 aa).

Belongs to the IspD/TarI cytidylyltransferase family. IspD subfamily. In terms of assembly, homodimer.

It catalyses the reaction 2-C-methyl-D-erythritol 4-phosphate + CTP + H(+) = 4-CDP-2-C-methyl-D-erythritol + diphosphate. It participates in isoprenoid biosynthesis; isopentenyl diphosphate biosynthesis via DXP pathway; isopentenyl diphosphate from 1-deoxy-D-xylulose 5-phosphate: step 2/6. Catalyzes the formation of 4-diphosphocytidyl-2-C-methyl-D-erythritol from CTP and 2-C-methyl-D-erythritol 4-phosphate (MEP). This Salmonella arizonae (strain ATCC BAA-731 / CDC346-86 / RSK2980) protein is 2-C-methyl-D-erythritol 4-phosphate cytidylyltransferase.